A 369-amino-acid chain; its full sequence is Anhydro-N-acetylmuramic acid kinase (369 aa).

12–19 lines the ATP pocket; the sequence is GTSMDGVD.

Belongs to the anhydro-N-acetylmuramic acid kinase family.

It catalyses the reaction 1,6-anhydro-N-acetyl-beta-muramate + ATP + H2O = N-acetyl-D-muramate 6-phosphate + ADP + H(+). The protein operates within amino-sugar metabolism; 1,6-anhydro-N-acetylmuramate degradation. Its pathway is cell wall biogenesis; peptidoglycan recycling. In terms of biological role, catalyzes the specific phosphorylation of 1,6-anhydro-N-acetylmuramic acid (anhMurNAc) with the simultaneous cleavage of the 1,6-anhydro ring, generating MurNAc-6-P. Is required for the utilization of anhMurNAc either imported from the medium or derived from its own cell wall murein, and thus plays a role in cell wall recycling. The chain is Anhydro-N-acetylmuramic acid kinase from Shewanella halifaxensis (strain HAW-EB4).